Consider the following 155-residue polypeptide: Cell division protein SepF (155 aa).

The span at 16-35 (TEDEEEDVETVEESEDVEEE) shows a compositional bias: acidic residues. The segment at 16–44 (TEDEEEDVETVEESEDVEEEESKKPQFIQ) is disordered.

The protein belongs to the SepF family. Homodimer. Interacts with FtsZ.

It localises to the cytoplasm. Cell division protein that is part of the divisome complex and is recruited early to the Z-ring. Probably stimulates Z-ring formation, perhaps through the cross-linking of FtsZ protofilaments. Its function overlaps with FtsA. The polypeptide is Cell division protein SepF (Acetivibrio thermocellus (strain ATCC 27405 / DSM 1237 / JCM 9322 / NBRC 103400 / NCIMB 10682 / NRRL B-4536 / VPI 7372) (Clostridium thermocellum)).